Reading from the N-terminus, the 78-residue chain is Large ribosomal subunit protein bL28 (78 aa).

Residues 1-26 form a disordered region; the sequence is MARVCQVTGKRPMSGHNVSHANNKTK.

Belongs to the bacterial ribosomal protein bL28 family.

This chain is Large ribosomal subunit protein bL28, found in Nitrosomonas europaea (strain ATCC 19718 / CIP 103999 / KCTC 2705 / NBRC 14298).